Reading from the N-terminus, the 275-residue chain is Endolytic peptidoglycan transglycosylase RlpA (275 aa).

Positions 1–22 (MQIKTITLKLSAVSLGALFFSG) are cleaved as a signal peptide. Cysteine 23 is lipidated: N-palmitoyl cysteine. A lipid anchor (S-diacylglycerol cysteine) is attached at cysteine 23. One can recognise an SPOR domain in the interval 200 to 275 (IYEGGNFMVQ…AFAGAFVVRE (76 aa)).

Belongs to the RlpA family.

The protein localises to the cell membrane. Lytic transglycosylase with a strong preference for naked glycan strands that lack stem peptides. In Campylobacter jejuni subsp. jejuni serotype O:2 (strain ATCC 700819 / NCTC 11168), this protein is Endolytic peptidoglycan transglycosylase RlpA.